The sequence spans 38 residues: Glutathione S-transferase 2 (38 aa).

It belongs to the GST superfamily. Phi family.

The enzyme catalyses RX + glutathione = an S-substituted glutathione + a halide anion + H(+). Functionally, conjugation of reduced glutathione to a wide number of exogenous and endogenous hydrophobic electrophiles. In plants, may have a detoxification role against certain herbicides. In Populus euphratica (Euphrates poplar), this protein is Glutathione S-transferase 2.